The following is a 119-amino-acid chain: Large ribosomal subunit protein uL14 (119 aa).

This sequence belongs to the universal ribosomal protein uL14 family. As to quaternary structure, part of the 50S ribosomal subunit. Forms a cluster with proteins L3 and L19. In the 70S ribosome, L14 and L19 interact and together make contacts with the 16S rRNA in bridges B5 and B8.

Functionally, binds to 23S rRNA. Forms part of two intersubunit bridges in the 70S ribosome. This chain is Large ribosomal subunit protein uL14, found in Anaplasma phagocytophilum (strain HZ).